A 512-amino-acid chain; its full sequence is Glutathione-binding protein GsiB (512 aa).

The N-terminal stretch at 1 to 26 (MARAVHRSGLVALGIATALMASCAFA) is a signal peptide.

This sequence belongs to the bacterial solute-binding protein 5 family. In terms of assembly, the complex is composed of two ATP-binding proteins (GsiA), two transmembrane proteins (GsiC and GsiD) and a solute-binding protein (GsiB).

It is found in the periplasm. Its function is as follows. Part of the ABC transporter complex GsiABCD involved in glutathione import. Binds glutathione. The protein is Glutathione-binding protein GsiB of Shigella flexneri.